The following is a 231-amino-acid chain: Lipoprotein-releasing system ATP-binding protein LolD (231 aa).

Residues 6 to 231 (LQVQAVSKSY…YLQAVAEHAQ (226 aa)) enclose the ABC transporter domain. 42–49 (GTSGSGKS) is an ATP binding site.

The protein belongs to the ABC transporter superfamily. Lipoprotein translocase (TC 3.A.1.125) family. In terms of assembly, the complex is composed of two ATP-binding proteins (LolD) and two transmembrane proteins (LolC and LolE).

It is found in the cell inner membrane. Part of the ABC transporter complex LolCDE involved in the translocation of mature outer membrane-directed lipoproteins, from the inner membrane to the periplasmic chaperone, LolA. Responsible for the formation of the LolA-lipoprotein complex in an ATP-dependent manner. This Shewanella sp. (strain MR-4) protein is Lipoprotein-releasing system ATP-binding protein LolD.